We begin with the raw amino-acid sequence, 465 residues long: GTPase Der (465 aa).

EngA-type G domains are found at residues 3–166 (FLVA…LNEY) and 184–358 (IHFS…ACAN). GTP contacts are provided by residues 9–16 (GRANVGKS), 56–60 (DTGGI), 118–121 (NKVD), 190–197 (GRPNVGKS), 237–241 (DTAGV), and 302–305 (NKWD). Residues 359–443 (KKITTADATR…PIVFEFKQSE (85 aa)) enclose the KH-like domain. The tract at residues 446–465 (FADRKNKRSKDEGSKSKKVK) is disordered.

It belongs to the TRAFAC class TrmE-Era-EngA-EngB-Septin-like GTPase superfamily. EngA (Der) GTPase family. Associates with the 50S ribosomal subunit.

Functionally, GTPase that plays an essential role in the late steps of ribosome biogenesis. The protein is GTPase Der of Francisella tularensis subsp. holarctica (strain FTNF002-00 / FTA).